Reading from the N-terminus, the 159-residue chain is Ribosome maturation factor RimP (159 aa).

It belongs to the RimP family.

It is found in the cytoplasm. Required for maturation of 30S ribosomal subunits. This is Ribosome maturation factor RimP from Geotalea daltonii (strain DSM 22248 / JCM 15807 / FRC-32) (Geobacter daltonii).